The primary structure comprises 1476 residues: MDKKVRYKLRKVKKRWVTVSVASAVMTLTTLSGGLVKADSNESKSQISNDSNTSVVTANEESNVTTEVTSKQEAASSQTNHTVTTISSSTSVVNPKEVVSNPYTVGETASNGEKLQNQTTTVDKTSEAAANNISKQTTEADTDVIDDSNAANLQILEKLPNVKEIDGKYYYYDNNGKVRTNFTLIADGKILHFDETGAYTDTSIDTVNKDIVTTRSNLYKKYNQVYDRSAQSFEHVDHYLTAESWYRPKYILKDGKTWTQSTEKDFRPLLMTWWPSQETQRQYVNYMNAQLGINKTYDDTSNQLQLNIAAATIQAKIEAKITTLKNTDWLRQTISAFVKTQSAWNSDSEKPFDDHLQNGAVLYDNEGKLTPYANSNYRILNRTPTNQTGKKDPRYTADNTIGGYEFLLANDVDNSNPVVQAEQLNWLHFLMNFGNIYANDPDANFDSIRVDAVDNVDADLLQIAGDYLKAAKGIHKNDKAANDHLSILEAWSDNDTPYLHDDGDNMINMDNKLRLSLLFSLAKPLNQRSGMNPLITNSLVNRTDDNAETAAVPSYSFIRAHDSEVQDLIRDIIKAEINPNVVGYSFTMEEIKKAFEIYNKDLLATEKKYTHYNTALSYALLLTNKSSVPRVYYGDMFTDDGQYMAHKTINYEAIETLLKARIKYVSGGQAMRNQQVGNSEIITSVRYGKGALKATDTGDRTTRTSGVAVIEGNNPSLRLKASDRVVVNMGAAHKNQAYRPLLLTTDNGIKAYHSDQEAAGLVRYTNDRGELIFTAADIKGYANPQVSGYLGVWVPVGAAADQDVRVAASTAPSTDGKSVHQNAALDSRVMFEGFSNFQAFATKKEEYTNVVIAKNVDKFAEWGVTDFEMAPQYVSSTDGSFLDSVIQNGYAFTDRYDLGISKPNKYGTADDLVKAIKALHSKGIKVMADWVPDQMYAFPEKEVVTATRVDKFGKPVEGSQIKSVLYVADSKSSGKDQQAKYGGAFLEELQAKYPELFARKQISTGVPMDPSVKIKQWSAKYFNGTNILGRGAGYVLKDQATNTYFNISDNKEINFLPKTLLNQDSQVGFSYDGKGYVYYSTSGYQAKNTFISEGDKWYYFDNNGYMVTGAQSINGVNYYFLSNGLQLRDAILKNEDGTYAYYGNDGRRYENGYYQFMSGVWRHFNNGEMSVGLTVIDGQVQYFDEMGYQAKGKFVTTADGKIRYFDKQSGNMYRNRFIENEEGKWLYLGEDGAAVTGSQTINGQHLYFRANGVQVKGEFVTDRYGRISYYDSNSGDQIRNRFVRNAQGQWFYFDNNGYAVTGARTINGQHLYFRANGVQVKGEFVTDRHGRISYYDGNSGDQIRNRFVRNAQGQWFYFDNNGYAVTGARTINGQHLYFRANGVQVKGEFVTDRYGRISYYDSNSGDQIRNRFVRNAQGQWFYFDNNGYAVTGARTINGQHLYFRANGVQVKGEFVTDRYGRISYYDANSGERVRIN.

Residues 1-34 (MDKKVRYKLRKVKKRWVTVSVASAVMTLTTLSGG) form the signal peptide. Disordered stretches follow at residues 42–89 (ESKS…ISSS) and 102–141 (PYTV…TEAD). Polar residues-rich tracts occupy residues 43–81 (SKSQ…QTNH) and 102–139 (PYTV…QTTE). 2 Cell wall-binding repeats span residues 159–178 (LPNV…NGKV) and 179–199 (RTNF…TGAY). Positions 200-1051 (TDTSIDTVNK…NTYFNISDNK (852 aa)) are catalytic; approximate. Cell wall-binding repeat units follow at residues 1087-1106 (KNTF…NGYM), 1107-1126 (VTGA…NGLQ), 1170-1189 (SVGL…MGYQ), 1214-1234 (RNRF…DGAA), 1235-1254 (VTGS…NGVQ), 1279-1299 (RNRF…NGYA), 1300-1319 (VTGA…NGVQ), 1344-1364 (RNRF…NGYA), 1365-1384 (VTGA…NGVQ), 1409-1429 (RNRF…NGYA), and 1430-1449 (VTGA…NGVQ).

Belongs to the glycosyl hydrolase 70 family.

The protein localises to the secreted. It carries out the reaction [(1-&gt;6)-alpha-D-glucosyl](n) + sucrose = [(1-&gt;6)-alpha-D-glucosyl](n+1) + D-fructose. In terms of biological role, production of extracellular glucans, that are thought to play a key role in the development of the dental plaque because of their ability to adhere to smooth surfaces and mediate the aggregation of bacterial cells and food debris. The protein is Glucosyltransferase-I (gtfB) of Streptococcus mutans serotype c (strain ATCC 700610 / UA159).